The primary structure comprises 416 residues: Methylthioribose-1-phosphate isomerase (416 aa).

Aspartate 280 (proton donor) is an active-site residue.

This sequence belongs to the eIF-2B alpha/beta/delta subunits family. MtnA subfamily.

The protein resides in the cytoplasm. The protein localises to the nucleus. The catalysed reaction is 5-(methylsulfanyl)-alpha-D-ribose 1-phosphate = 5-(methylsulfanyl)-D-ribulose 1-phosphate. Its pathway is amino-acid biosynthesis; L-methionine biosynthesis via salvage pathway; L-methionine from S-methyl-5-thio-alpha-D-ribose 1-phosphate: step 1/6. Functionally, catalyzes the interconversion of methylthioribose-1-phosphate (MTR-1-P) into methylthioribulose-1-phosphate (MTRu-1-P). The polypeptide is Methylthioribose-1-phosphate isomerase (Candida albicans (strain SC5314 / ATCC MYA-2876) (Yeast)).